We begin with the raw amino-acid sequence, 326 residues long: Glutamine synthetase (326 aa).

The GS beta-grasp domain occupies 4-85 (FKLEYIWLDG…VMCEVMMPDG (82 aa)). One can recognise a GS catalytic domain in the interval 83–326 (PDGHAHASNA…GDPYQIVRRF (244 aa)). Mg(2+) contacts are provided by glutamate 107 and glutamate 109. Glutamate 164 is a binding site for ATP. Mg(2+) contacts are provided by glutamate 169 and glutamate 176. Glutamate 275 is a binding site for L-glutamate.

The protein belongs to the glutamine synthetase family. As to quaternary structure, homooctamer and homotetramer. Requires Mg(2+) as cofactor.

The protein resides in the cytoplasm. The enzyme catalyses L-glutamate + NH4(+) + ATP = L-glutamine + ADP + phosphate + H(+). Transferase activity is inhibited by NH(4)Cl. Catalyzes the ATP-dependent biosynthesis of glutamine from glutamate and ammonia. The sequence is that of Glutamine synthetase from Rhizobium leguminosarum bv. phaseoli.